The chain runs to 477 residues: Bifunctional protein HldE (477 aa).

The ribokinase stretch occupies residues 1 to 318 (MKVTLPEFER…ENAVRGRADT (318 aa)). An ATP-binding site is contributed by 195–198 (NLSE). Residue Asp-264 is part of the active site. The tract at residues 344–477 (MTNGVFDILH…IKKIQKDSDK (134 aa)) is cytidylyltransferase.

The protein in the N-terminal section; belongs to the carbohydrate kinase PfkB family. In the C-terminal section; belongs to the cytidylyltransferase family. As to quaternary structure, homodimer.

It carries out the reaction D-glycero-beta-D-manno-heptose 7-phosphate + ATP = D-glycero-beta-D-manno-heptose 1,7-bisphosphate + ADP + H(+). The enzyme catalyses D-glycero-beta-D-manno-heptose 1-phosphate + ATP + H(+) = ADP-D-glycero-beta-D-manno-heptose + diphosphate. The protein operates within nucleotide-sugar biosynthesis; ADP-L-glycero-beta-D-manno-heptose biosynthesis; ADP-L-glycero-beta-D-manno-heptose from D-glycero-beta-D-manno-heptose 7-phosphate: step 1/4. It participates in nucleotide-sugar biosynthesis; ADP-L-glycero-beta-D-manno-heptose biosynthesis; ADP-L-glycero-beta-D-manno-heptose from D-glycero-beta-D-manno-heptose 7-phosphate: step 3/4. Functionally, catalyzes the phosphorylation of D-glycero-D-manno-heptose 7-phosphate at the C-1 position to selectively form D-glycero-beta-D-manno-heptose-1,7-bisphosphate. Its function is as follows. Catalyzes the ADP transfer from ATP to D-glycero-beta-D-manno-heptose 1-phosphate, yielding ADP-D-glycero-beta-D-manno-heptose. This is Bifunctional protein HldE from Citrobacter koseri (strain ATCC BAA-895 / CDC 4225-83 / SGSC4696).